The following is a 193-amino-acid chain: ATP-dependent protease subunit HslV (193 aa).

Threonine 12 is a catalytic residue. Na(+) contacts are provided by alanine 167, cysteine 170, and threonine 173.

This sequence belongs to the peptidase T1B family. HslV subfamily. As to quaternary structure, a double ring-shaped homohexamer of HslV is capped on each side by a ring-shaped HslU homohexamer. The assembly of the HslU/HslV complex is dependent on binding of ATP.

The protein resides in the cytoplasm. It carries out the reaction ATP-dependent cleavage of peptide bonds with broad specificity.. Its activity is regulated as follows. Allosterically activated by HslU binding. Functionally, protease subunit of a proteasome-like degradation complex believed to be a general protein degrading machinery. The protein is ATP-dependent protease subunit HslV of Bartonella henselae (strain ATCC 49882 / DSM 28221 / CCUG 30454 / Houston 1) (Rochalimaea henselae).